A 501-amino-acid chain; its full sequence is NAD(P)H-quinone oxidoreductase subunit 2, chloroplastic (501 aa).

Transmembrane regions (helical) follow at residues 15-35 (ILPECILIFSLLIILIIDLTF), 40-60 (TIWLYFISLTSLLISIIILLF), 82-102 (IFQSFIVFCSILCIPLSIEYI), 107-127 (MAIPEFLIFILTATVGGMFLC), 132-152 (LVTIFVSLECLSLCSYLLCGY), 167-187 (LLIGGTSSSILAYGFSWLYGL), 212-232 (TFIAFICILVGLAFKLSLVPF), 244-264 (PTPVVAFLSVTSKIAGLALAT), 278-298 (WKIFLEILAILSMILGNLVAI), 307-327 (LAYSSISQIGYILIGLITGDL), 333-353 (MTIYVFFYIFMNLGTFACIIL), 378-398 (FSLTLCLLSLGGLPPLTGFFG), 410-430 (GFYLLVFIALITSVISLYYYL), and 466-486 (FVMIFCVLGSTFLGIIINPIF).

The protein belongs to the complex I subunit 2 family. As to quaternary structure, NDH is composed of at least 16 different subunits, 5 of which are encoded in the nucleus.

It is found in the plastid. The protein localises to the chloroplast thylakoid membrane. It carries out the reaction a plastoquinone + NADH + (n+1) H(+)(in) = a plastoquinol + NAD(+) + n H(+)(out). The enzyme catalyses a plastoquinone + NADPH + (n+1) H(+)(in) = a plastoquinol + NADP(+) + n H(+)(out). Its function is as follows. NDH shuttles electrons from NAD(P)H:plastoquinone, via FMN and iron-sulfur (Fe-S) centers, to quinones in the photosynthetic chain and possibly in a chloroplast respiratory chain. The immediate electron acceptor for the enzyme in this species is believed to be plastoquinone. Couples the redox reaction to proton translocation, and thus conserves the redox energy in a proton gradient. In Marchantia polymorpha (Common liverwort), this protein is NAD(P)H-quinone oxidoreductase subunit 2, chloroplastic.